Reading from the N-terminus, the 702-residue chain is Choline transporter-like protein 5-A (702 aa).

The chain crosses the membrane as a helical span at residues 21-41 (VLCCVLFVIVILGYIALGTVA). The Extracellular portion of the chain corresponds to 42–225 (WIHGDPRKVI…KIVEDYASCW (184 aa)). N-linked (GlcNAc...) asparagine glycosylation is found at Asn-120, Asn-173, and Asn-180. A helical transmembrane segment spans residues 226–246 (YWIVIGLFIALVISLIFILLL). The Cytoplasmic portion of the chain corresponds to 247–249 (RFT). A helical transmembrane segment spans residues 250-270 (AGFLLWFIIFAVILLVAYGIW). Residues 271 to 308 (HCYWEFAVLRETPGADVTISDIGFQTDLHVYLQLSQTW) lie on the Extracellular side of the membrane. The helical transmembrane segment at 309 to 329 (LVFMVTLGLTEASIVLMLIFL) threads the bilayer. At 330 to 334 (RKRVR) the chain is on the cytoplasmic side. Residues 335-355 (IAIALLREGSRAISYIMSALF) traverse the membrane as a helical segment. The Extracellular portion of the chain corresponds to 356 to 357 (YP). Residues 358-378 (IITFVLLAICISYWAMTALFL) form a helical membrane-spanning segment. At 379 to 443 (ASSGDAVYKV…RYIFILQLCN (65 aa)) the chain is on the cytoplasmic side. Residues 444–464 (LLVFLWLVNFTIALGQCTVAG) traverse the membrane as a helical segment. Topologically, residues 465-498 (AFASYYWARRKPADIPPCPVFSSFSRALRYHTGS) are extracellular. Residues 499-519 (LAFGSLILAVVQLIRVILEYL) traverse the membrane as a helical segment. The Cytoplasmic portion of the chain corresponds to 520 to 593 (DHKLKGAHNA…RVAVLDKVTD (74 aa)). Residues 594-614 (FLLFLGKLLIAGSVGVIAFFL) traverse the membrane as a helical segment. Topologically, residues 615–632 (FTRKIPIIQEEVPVLNYY) are extracellular. A helical transmembrane segment spans residues 633–653 (CVPLLTVILGSYLIAHSFFSV). Topologically, residues 654–699 (YAMCVDTLFLCFCEDLERNDGTTAKPFFMSPGLKRILGKAEQSPKK) are cytoplasmic.

This sequence belongs to the CTL (choline transporter-like) family.

It is found in the cell membrane. It catalyses the reaction choline(out) + n H(+)(in) = choline(in) + n H(+)(out). Its function is as follows. Choline/H+ antiporter. The sequence is that of Choline transporter-like protein 5-A (slc44a5a) from Danio rerio (Zebrafish).